A 685-amino-acid polypeptide reads, in one-letter code: Mitotic interactor and substrate of PLK1 (685 aa).

S78 carries the post-translational modification Phosphoserine; by CDK1. Disordered regions lie at residues 155-181 (SGTVATLQAAPDHGDPRTPGPPRSTPL) and 207-253 (NKEV…QGKG). T172 carries the post-translational modification Phosphothreonine; by CDK1. T179 is modified (phosphothreonine). S214 is modified (phosphoserine; by CDK1). T219 is modified (phosphothreonine). S284 bears the Phosphoserine; by CDK1 mark. The residue at position 287 (T287) is a Phosphothreonine; by CDK1. The disordered stretch occupies residues 345–499 (GRPSLYVQRD…PWKLPRGSPQ (155 aa)). S348 is subject to Phosphoserine. Basic and acidic residues predominate over residues 355–371 (MVQETQREEDHRREGLH). Phosphothreonine; by CDK1 is present on T377. Position 382 is a phosphoserine (S382). Residues 392–417 (ALSSDSILSPDSILSPAPDARAADPA) show a composition bias toward low complexity. Phosphoserine; by PLK1 is present on residues S394, S395, and S397. S406 and S436 each carry phosphoserine. A compositionally biased stretch (polar residues) spans 454–469 (SGLSTVDTEAATSPKA). At S477 the chain carries Phosphoserine; by PLK1. The span at 478–488 (ESSGKPMSTKQ) shows a compositional bias: polar residues. A phosphoserine mark is found at S547 and S549. A coiled-coil region spans residues 551–575 (DLLERERESVLRREREVAEERRNAL). Disordered stretches follow at residues 575-607 (LFPEVFSPTPDESCDQNSRSSSQASGITGSYSV) and 629-651 (PVDSAPPGQRKKEQWYAGINPSD). At S581 the chain carries Phosphoserine; by PLK1. The residue at position 583 (T583) is a Phosphothreonine. Over residues 589 to 607 (DQNSRSSSQASGITGSYSV) the composition is skewed to polar residues. The residue at position 592 (S592) is a Phosphoserine; by PLK1. S681 carries the post-translational modification Phosphoserine.

This sequence belongs to the MISP family. As to quaternary structure, associates with F-actin. Interacts with DCTN1; this interaction regulates DCTN1 distribution at the cell cortex. Interacts with PTK2/FAK and MAPRE1. In terms of processing, phosphorylated by CDK1 and PLK1. CDK1 is the priming kinase for PLK1 phosphorylation. Phosphorylation by PLK1 is required for proper spindle orientation at metaphase.

The protein resides in the cell junction. It localises to the focal adhesion. The protein localises to the cytoplasm. Its subcellular location is the cytoskeleton. It is found in the cell cortex. In terms of biological role, plays a role in mitotic spindle orientation and mitotic progression. Regulates the distribution of dynactin at the cell cortex in a PLK1-dependent manner, thus stabilizing cortical and astral microtubule attachments required for proper mitotic spindle positioning. May link microtubules to the actin cytospkeleton and focal adhesions. May be required for directed cell migration and centrosome orientation. May also be necessary for proper stacking of the Golgi apparatus. In Pongo abelii (Sumatran orangutan), this protein is Mitotic interactor and substrate of PLK1.